Here is a 481-residue protein sequence, read N- to C-terminus: Membrane-bound lytic murein transglycosylase F (481 aa).

A signal peptide spans 1 to 21 (MKPLKLNYFFIGIITLLLALA). The interval 22–268 (LWPSIPWRSS…RLEEKYLGHV (247 aa)) is non-LT domain. Residues 269–481 (GEFDYVDTTT…PAVPLTKVPE (213 aa)) form an LT domain region. The active site involves Glu313.

It in the N-terminal section; belongs to the bacterial solute-binding protein 3 family. This sequence in the C-terminal section; belongs to the transglycosylase Slt family.

Its subcellular location is the cell outer membrane. It catalyses the reaction Exolytic cleavage of the (1-&gt;4)-beta-glycosidic linkage between N-acetylmuramic acid (MurNAc) and N-acetylglucosamine (GlcNAc) residues in peptidoglycan, from either the reducing or the non-reducing ends of the peptidoglycan chains, with concomitant formation of a 1,6-anhydrobond in the MurNAc residue.. In terms of biological role, murein-degrading enzyme that degrades murein glycan strands and insoluble, high-molecular weight murein sacculi, with the concomitant formation of a 1,6-anhydromuramoyl product. Lytic transglycosylases (LTs) play an integral role in the metabolism of the peptidoglycan (PG) sacculus. Their lytic action creates space within the PG sacculus to allow for its expansion as well as for the insertion of various structures such as secretion systems and flagella. The chain is Membrane-bound lytic murein transglycosylase F from Pectobacterium atrosepticum (strain SCRI 1043 / ATCC BAA-672) (Erwinia carotovora subsp. atroseptica).